The following is an 844-amino-acid chain: Eukaryotic translation elongation factor 2 (844 aa).

Residues 17-348 (RNIRNMSVIA…MIAIHLPSPV (332 aa)) enclose the tr-type G domain. GTP is bound at residue 26–33 (AHVDHGKS). 2 positions are modified to phosphothreonine: Thr57 and Thr59. Residues 162–165 (NKMD) and 219–221 (SGL) each bind GTP. A Diphthamide modification is found at His701.

This sequence belongs to the TRAFAC class translation factor GTPase superfamily. Classic translation factor GTPase family. EF-G/EF-2 subfamily. Phosphorylation by EF-2 kinase completely inactivates eEF2.

The protein localises to the cytoplasm. It catalyses the reaction GTP + H2O = GDP + phosphate + H(+). Its function is as follows. Catalyzes the GTP-dependent ribosomal translocation step during translation elongation. During this step, the ribosome changes from the pre-translocational (PRE) to the post-translocational (POST) state as the newly formed A-site-bound peptidyl-tRNA and P-site-bound deacylated tRNA move to the P and E sites, respectively. Catalyzes the coordinated movement of the two tRNA molecules, the mRNA and conformational changes in the ribosome. This is Eukaryotic translation elongation factor 2 from Drosophila melanogaster (Fruit fly).